A 211-amino-acid chain; its full sequence is Interleukin-6 (211 aa).

A signal peptide spans 1 to 29; that stretch reads MNSLSTSAFSPVAFSLGLLLVMATAFPTP. Residues cysteine 71 and cysteine 77 are joined by a disulfide bond. The residue at position 80 (serine 80) is a Phosphoserine. The cysteines at positions 100 and 110 are disulfide-linked.

It belongs to the IL-6 superfamily. Component of a hexamer of two molecules each of IL6, IL6R and IL6ST; first binds to IL6R to associate with the signaling subunit IL6ST. Interacts with IL6R (via the N-terminal ectodomain); this interaction may be affected by IL6R-binding with SORL1, hence decreasing IL6 cis signaling. Interacts with SORL1 (via the N-terminal ectodomain); this interaction leads to IL6 internalization and lysosomal degradation. May form a trimeric complex with the soluble SORL1 ectodomain and soluble IL6R receptor; this interaction might stabilize circulating IL6, hence promoting IL6 trans signaling.

It is found in the secreted. Cytokine with a wide variety of biological functions in immunity, tissue regeneration, and metabolism. Binds to IL6R, then the complex associates to the signaling subunit IL6ST/gp130 to trigger the intracellular IL6-signaling pathway. The interaction with the membrane-bound IL6R and IL6ST stimulates 'classic signaling', whereas the binding of IL6 and soluble IL6R to IL6ST stimulates 'trans-signaling'. Alternatively, 'cluster signaling' occurs when membrane-bound IL6:IL6R complexes on transmitter cells activate IL6ST receptors on neighboring receiver cells. In terms of biological role, IL6 is a potent inducer of the acute phase response. Rapid production of IL6 contributes to host defense during infection and tissue injury, but excessive IL6 synthesis is involved in disease pathology. In the innate immune response, is synthesized by myeloid cells, such as macrophages and dendritic cells, upon recognition of pathogens through toll-like receptors (TLRs) at the site of infection or tissue injury. In the adaptive immune response, is required for the differentiation of B cells into immunoglobulin-secreting cells. Plays a major role in the differentiation of CD4(+) T cell subsets. Essential factor for the development of T follicular helper (Tfh) cells that are required for the induction of germinal-center formation. Required to drive naive CD4(+) T cells to the Th17 lineage. Also required for proliferation of myeloma cells and the survival of plasmablast cells. Functionally, acts as an essential factor in bone homeostasis and on vessels directly or indirectly by induction of VEGF, resulting in increased angiogenesis activity and vascular permeability. Induces, through 'trans-signaling' and synergistically with IL1B and TNF, the production of VEGF. Involved in metabolic controls, is discharged into the bloodstream after muscle contraction increasing lipolysis and improving insulin resistance. 'Trans-signaling' in central nervous system also regulates energy and glucose homeostasis. Mediates, through GLP-1, crosstalk between insulin-sensitive tissues, intestinal L cells and pancreatic islets to adapt to changes in insulin demand. Also acts as a myokine. Plays a protective role during liver injury, being required for maintenance of tissue regeneration. Also has a pivotal role in iron metabolism by regulating HAMP/hepcidin expression upon inflammation or bacterial infection. Through activation of IL6ST-YAP-NOTCH pathway, induces inflammation-induced epithelial regeneration. This is Interleukin-6 (IL6) from Camelus bactrianus (Bactrian camel).